A 415-amino-acid chain; its full sequence is Diaminopimelate decarboxylase (415 aa).

Position 54 is an N6-(pyridoxal phosphate)lysine (lysine 54). Residues glycine 223 and 264 to 267 (EPGR) contribute to the pyridoxal 5'-phosphate site. Substrate is bound by residues arginine 267, arginine 303, and tyrosine 307. Catalysis depends on cysteine 338, which acts as the Proton donor. The substrate site is built by glutamate 339 and tyrosine 374. Tyrosine 374 contacts pyridoxal 5'-phosphate.

The protein belongs to the Orn/Lys/Arg decarboxylase class-II family. LysA subfamily. In terms of assembly, homodimer. It depends on pyridoxal 5'-phosphate as a cofactor.

The catalysed reaction is meso-2,6-diaminopimelate + H(+) = L-lysine + CO2. It functions in the pathway amino-acid biosynthesis; L-lysine biosynthesis via DAP pathway; L-lysine from DL-2,6-diaminopimelate: step 1/1. Specifically catalyzes the decarboxylation of meso-diaminopimelate (meso-DAP) to L-lysine. This chain is Diaminopimelate decarboxylase, found in Buchnera aphidicola subsp. Acyrthosiphon pisum (strain APS) (Acyrthosiphon pisum symbiotic bacterium).